The primary structure comprises 272 residues: MIKKAIIPAGGFGTRNLPVTKVIPKEMFPVGSKPVIHYLVEELKESGIEDILMVVSSHKNLIVDYFDSSLALEAFLASKNKLHLLREHPIPDIRIHYVRQPYAKGLGDAISFGKQFAGGEPFAVVLPDDLIFSANQPALGQLIEAYTKYQSSVIGLKETKTEDLHHYGVIKGEPVEKGLYRIQDIVEKPKQNPPSHFAAAGRYIFTPDIFNELEALEADSGGEVQVTDAIKASLGACTVYGKLLEGERYDIGLQKDYLKLIYDMLKTEKNPQ.

This sequence belongs to the UDPGP type 2 family.

It carries out the reaction alpha-D-glucose 1-phosphate + UTP + H(+) = UDP-alpha-D-glucose + diphosphate. The chain is Putative UTP--glucose-1-phosphate uridylyltransferase (ytdA) from Bacillus subtilis (strain 168).